The sequence spans 141 residues: Large ribosomal subunit protein uL11 (141 aa).

Belongs to the universal ribosomal protein uL11 family. As to quaternary structure, part of the ribosomal stalk of the 50S ribosomal subunit. Interacts with L10 and the large rRNA to form the base of the stalk. L10 forms an elongated spine to which L12 dimers bind in a sequential fashion forming a multimeric L10(L12)X complex. In terms of processing, one or more lysine residues are methylated.

In terms of biological role, forms part of the ribosomal stalk which helps the ribosome interact with GTP-bound translation factors. The sequence is that of Large ribosomal subunit protein uL11 from Gloeothece citriformis (strain PCC 7424) (Cyanothece sp. (strain PCC 7424)).